A 37-amino-acid chain; its full sequence is Cytochrome b6-f complex subunit 5 (37 aa).

A helical membrane pass occupies residues 5-25; sequence LLSGIVLGLVPITITGLLVTA.

It belongs to the PetG family. As to quaternary structure, the 4 large subunits of the cytochrome b6-f complex are cytochrome b6, subunit IV (17 kDa polypeptide, PetD), cytochrome f and the Rieske protein, while the 4 small subunits are PetG, PetL, PetM and PetN. The complex functions as a dimer.

The protein localises to the plastid. The protein resides in the chloroplast thylakoid membrane. In terms of biological role, component of the cytochrome b6-f complex, which mediates electron transfer between photosystem II (PSII) and photosystem I (PSI), cyclic electron flow around PSI, and state transitions. PetG is required for either the stability or assembly of the cytochrome b6-f complex. The sequence is that of Cytochrome b6-f complex subunit 5 from Tupiella akineta (Green alga).